Here is a 349-residue protein sequence, read N- to C-terminus: UDP-N-acetylenolpyruvoylglucosamine reductase (349 aa).

Residues 24–197 (FGIDATARFA…VAVTFRLPKR (174 aa)) enclose the FAD-binding PCMH-type domain. Arg-173 is an active-site residue. The Proton donor role is filled by Ser-249. Glu-345 is a catalytic residue.

This sequence belongs to the MurB family. FAD serves as cofactor.

Its subcellular location is the cytoplasm. The catalysed reaction is UDP-N-acetyl-alpha-D-muramate + NADP(+) = UDP-N-acetyl-3-O-(1-carboxyvinyl)-alpha-D-glucosamine + NADPH + H(+). It participates in cell wall biogenesis; peptidoglycan biosynthesis. In terms of biological role, cell wall formation. This is UDP-N-acetylenolpyruvoylglucosamine reductase from Burkholderia ambifaria (strain ATCC BAA-244 / DSM 16087 / CCUG 44356 / LMG 19182 / AMMD) (Burkholderia cepacia (strain AMMD)).